A 265-amino-acid chain; its full sequence is Transmembrane protein 270 (265 aa).

Transmembrane regions (helical) follow at residues 72–92 (PLGQ…WLVL), 130–150 (LFLS…VVTW), and 185–205 (LYWW…YLIT). A disordered region spans residues 229-265 (QEVEPQEVSGSSLLPSLSASSDSESGTVLPEQETPRE). The segment covering 237–253 (SGSSLLPSLSASSDSES) has biased composition (low complexity).

The protein resides in the membrane. The polypeptide is Transmembrane protein 270 (Homo sapiens (Human)).